We begin with the raw amino-acid sequence, 459 residues long: MDQSNRYADLSLTEAELIAGGQHILCAYKMKPKAGHRYLEAAAHFAAESSTGTNVEVCTTDEFTKGVDALVYHIDEASEDMRIAYPLDLFDRNMTDGRMMMASFLTLTIGNNQGMGDIEHAKMVDFYVPRRGIELFDGPSKDISDLWRMLGRPVKDGGYIAGTIIKPKLGLRPEPFARAAYEFWLGGDFIKNDEPQGNQVFAPLKKVIPLVYDSMKRAMDETGEAKLFSMNITADDHFEMCARADFALEAFGPDADKLAFLVDGYVGGPGMITTARRQYPNQYLHYHRAGHGAVTSPSSKRGYTAYVLAKMSRLQGASGIHVGTMGYGKMEGDKDDRACAYIIERDSYTGPVYHQEWYGMKPTTPIISGGMNALRLPGFFENLGHGNVINTAGGGAYGHIDSPAAGARSLRQAYDCWKAGADPVEWARDHYEFARAFESFPQDADQLYPGWRHKLRPAA.

Asparagine 111 is a binding site for substrate. Residue lysine 166 is the Proton acceptor of the active site. Residue lysine 168 participates in substrate binding. The Mg(2+) site is built by lysine 191, aspartate 193, and glutamate 194. Lysine 191 is modified (N6-carboxylysine). Histidine 287 acts as the Proton acceptor in catalysis. The substrate site is built by arginine 288, histidine 321, and serine 368.

This sequence belongs to the RuBisCO large chain family. Type II subfamily. As to quaternary structure, homodimer. It depends on Mg(2+) as a cofactor.

It catalyses the reaction 2 (2R)-3-phosphoglycerate + 2 H(+) = D-ribulose 1,5-bisphosphate + CO2 + H2O. It carries out the reaction D-ribulose 1,5-bisphosphate + O2 = 2-phosphoglycolate + (2R)-3-phosphoglycerate + 2 H(+). Functionally, ruBisCO catalyzes two reactions: the carboxylation of D-ribulose 1,5-bisphosphate, the primary event in carbon dioxide fixation, as well as the oxidative fragmentation of the pentose substrate. Both reactions occur simultaneously and in competition at the same active site. The protein is Ribulose bisphosphate carboxylase of Dechloromonas aromatica (strain RCB).